The primary structure comprises 318 residues: Ankyrin repeat and SOCS box protein 7 (318 aa).

ANK repeat units follow at residues 13 to 42 (QEEL…SPNG), 46 to 75 (NGWT…DPTV), 80 to 109 (GGFT…RSDI), 116 to 145 (DGWT…EVDP), 149 to 178 (KGTT…NIDI), 180 to 208 (NGFL…DTNL), and 213 to 242 (DGQT…DTNT). One can recognise an SOCS box domain in the interval 265–318 (LDFLQEVTRQPRNLQDLCRIKIRQCIGLQNLKLLDELPIAKVMKDYLKHKFDDI).

Belongs to the ankyrin SOCS box (ASB) family. In terms of assembly, interacts with CUL5. Interacts with RNF7. Interacts with PSRC1.

The protein operates within protein modification; protein ubiquitination. Its function is as follows. Probable substrate-recognition component of a SCF-like ECS (Elongin-Cullin-SOCS-box protein) E3 ubiquitin-protein ligase complex which mediates the ubiquitination and subsequent proteasomal degradation of target proteins. Plays a role in spindle dynamics and genome integrity by targeting the mitotic progression protein PSRC1 for proteasomal degradation in a cell cycle-dependent manner. Also participates in meiosis by mediating the proper attachment between kinetochores and microtubules. In Homo sapiens (Human), this protein is Ankyrin repeat and SOCS box protein 7 (ASB7).